Here is a 251-residue protein sequence, read N- to C-terminus: Flap endonuclease Xni (251 aa).

Aspartate 104 lines the Mg(2+) pocket. The region spanning 160–249 (VTPEQLADYW…LDGNLQQLRL (90 aa)) is the 5'-3' exonuclease domain. Residues leucine 171, alanine 172, proline 180, valine 182, and isoleucine 185 each contribute to the K(+) site. The tract at residues 184 to 189 (GIGPKS) is interaction with DNA.

It belongs to the Xni family. Mg(2+) is required as a cofactor. Requires K(+) as cofactor.

In terms of biological role, has flap endonuclease activity. During DNA replication, flap endonucleases cleave the 5'-overhanging flap structure that is generated by displacement synthesis when DNA polymerase encounters the 5'-end of a downstream Okazaki fragment. This Klebsiella pneumoniae subsp. pneumoniae (strain ATCC 700721 / MGH 78578) protein is Flap endonuclease Xni.